Reading from the N-terminus, the 291-residue chain is ATP synthase gamma chain (291 aa).

It belongs to the ATPase gamma chain family. In terms of assembly, F-type ATPases have 2 components, CF(1) - the catalytic core - and CF(0) - the membrane proton channel. CF(1) has five subunits: alpha(3), beta(3), gamma(1), delta(1), epsilon(1). CF(0) has three main subunits: a, b and c.

The protein localises to the cell inner membrane. Functionally, produces ATP from ADP in the presence of a proton gradient across the membrane. The gamma chain is believed to be important in regulating ATPase activity and the flow of protons through the CF(0) complex. In Cupriavidus necator (strain ATCC 17699 / DSM 428 / KCTC 22496 / NCIMB 10442 / H16 / Stanier 337) (Ralstonia eutropha), this protein is ATP synthase gamma chain.